Here is a 261-residue protein sequence, read N- to C-terminus: Glucanase inhibitor protein 3 (261 aa).

An N-terminal signal peptide occupies residues M1–A21. The Peptidase S1 domain maps to I29–K260. C56 and C72 form a disulfide bridge. N108 carries an N-linked (GlcNAc...) asparagine glycan. Intrachain disulfides connect C183–C195 and C205–C236.

It belongs to the peptidase S1 family.

Its subcellular location is the secreted. Functionally, secreted effector that suppresses host plant glucan elicitor-mediated defense responses. Targets host endoglucanases and inhibits the endoglucanase-mediated release of elicitor-active glucan oligosaccharides from P.sojae cell walls. The protein is Glucanase inhibitor protein 3 (GIP3) of Phytophthora sojae (strain P6497) (Soybean stem and root rot agent).